The sequence spans 104 residues: Small ribosomal subunit protein uS10 (104 aa).

It belongs to the universal ribosomal protein uS10 family. In terms of assembly, part of the 30S ribosomal subunit.

In terms of biological role, involved in the binding of tRNA to the ribosomes. This Hydrogenobaculum sp. (strain Y04AAS1) protein is Small ribosomal subunit protein uS10.